Consider the following 135-residue polypeptide: UPF0329 protein ECU07_1860/ECU10_0040/ECU11_2100 (135 aa).

Belongs to the UPF0329 family.

In Encephalitozoon cuniculi (strain GB-M1) (Microsporidian parasite), this protein is UPF0329 protein ECU07_1860/ECU10_0040/ECU11_2100.